The following is a 348-amino-acid chain: 2-methyl-6-phytyl-1,4-hydroquinone methyltransferase 2, chloroplastic (348 aa).

A disordered region spans residues 1-48 (MAMASSAYAPAGGVGTHSAPGRIRPPRGLGFSTTTTKSRPLVLTRRGG). A chloroplast-targeting transit peptide spans 1–59 (MAMASSAYAPAGGVGTHSAPGRIRPPRGLGFSTTTTKSRPLVLTRRGGGGGNISVARLR). The Chloroplast intermembrane portion of the chain corresponds to 60–317 (CAASSSSAAA…PVNPITFLFR (258 aa)). The segment at 125 to 134 (VVDVGGGTGF) is SAM motif I. Residues 170-183 (VTIMEGDAEDLPFP) form an SAM motif II region. Residues 211-224 (RVLRLGGVACMIGP) are SAM motif III. A helical transmembrane segment spans residues 318–338 (FLMGTICAAYYVLVPIYMWIK). The Stromal segment spans residues 339 to 348 (DQIVPKGMPI).

Belongs to the class I-like SAM-binding methyltransferase superfamily. MPBQ/MBSQ MT family.

It is found in the plastid. Its subcellular location is the chloroplast inner membrane. It carries out the reaction 2-methyl-6-phytyl-1,4-benzene-1,4-diol + S-adenosyl-L-methionine = 2,3-dimethyl-6-phytylbenzene-1,4-diol + S-adenosyl-L-homocysteine + H(+). The enzyme catalyses 2-methyl-6-(all-trans-nonaprenyl)benzene-1,4-diol + S-adenosyl-L-methionine = plastoquinol-9 + S-adenosyl-L-homocysteine + H(+). The catalysed reaction is 6-geranylgeranyl-2-methylbenzene-1,4-diol + S-adenosyl-L-methionine = 6-geranylgeranyl-2,3-dimethylbenzene-1,4-diol + S-adenosyl-L-homocysteine + H(+). It functions in the pathway cofactor biosynthesis; tocopherol biosynthesis. Involved in a key methylation step in both tocopherols (vitamin E) and plastoquinone synthesis. Catalyzes the conversion of 2-methyl-6-phytyl-1,4-hydroquinone (MPBQ) to 2,3-dimethyl-6-phytyl-1,4-hydroquinone (DMPQ, a substrate for tocopherol cyclase), and 2-methyl-6-solanyl-1,4-benzoquinone (MSBQ) to plastoquinone. This is 2-methyl-6-phytyl-1,4-hydroquinone methyltransferase 2, chloroplastic from Oryza sativa subsp. japonica (Rice).